The following is a 79-amino-acid chain: uncharacterized protein (79 aa).

A signal peptide spans 1–20 (MSQLMGIITRLQSLQETAEA).

This is an uncharacterized protein from Bacillus subtilis (strain 168).